The following is a 238-amino-acid chain: Probable transcriptional regulatory protein SGO_0454 (238 aa).

The protein belongs to the TACO1 family. YeeN subfamily.

The protein localises to the cytoplasm. The chain is Probable transcriptional regulatory protein SGO_0454 from Streptococcus gordonii (strain Challis / ATCC 35105 / BCRC 15272 / CH1 / DL1 / V288).